A 278-amino-acid polypeptide reads, in one-letter code: MQQPVNYPCPQIYWVDSSATSPWAPPGSVFSCPSSGPRGPGQRRPPPPPPPPSPLPPPSQPPPLPPLSPLKKKDNIELWLPVIFFMVLVALVGMGLGMYQLFHLQKELAELREFTNHSLRVSSFEKQIANPSTPSETKKPRSVAHLTGNPRSRSIPLEWEDTYGTALISGVKYKKGGLVINEAGLYFVYSKVYFRGQSCNSQPLSHKVYMRNFKYPGDLVLMEEKKLNYCTTGQIWAHSSYLGAVFNLTVADHLYVNISQLSLINFEESKTFFGLYKL.

The Cytoplasmic portion of the chain corresponds to 1-77; sequence MQQPVNYPCP…SPLKKKDNIE (77 aa). Residues 26–68 are disordered; that stretch reads PGSVFSCPSSGPRGPGQRRPPPPPPPPSPLPPPSQPPPLPPLS. A compositionally biased stretch (low complexity) spans 33-42; sequence PSSGPRGPGQ. Positions 43–68 are enriched in pro residues; that stretch reads RRPPPPPPPPSPLPPPSQPPPLPPLS. Residues 78–99 form a helical; Signal-anchor for type II membrane protein membrane-spanning segment; sequence LWLPVIFFMVLVALVGMGLGMY. Over 100 to 278 the chain is Extracellular; that stretch reads QLFHLQKELA…SKTFFGLYKL (179 aa). A glycan (N-linked (GlcNAc...) asparagine) is linked at Asn-116. The span at 125–135 shows a compositional bias: polar residues; sequence EKQIANPSTPS. The disordered stretch occupies residues 125–147; the sequence is EKQIANPSTPSETKKPRSVAHLT. The region spanning 142–278 is the THD domain; the sequence is SVAHLTGNPR…SKTFFGLYKL (137 aa). Cys-199 and Cys-230 are joined by a disulfide. Asn-247 and Asn-257 each carry an N-linked (GlcNAc...) asparagine glycan.

This sequence belongs to the tumor necrosis factor family. As to quaternary structure, homotrimer. Interacts with ARHGAP9, BAIAP2L1, BTK, CACNB3, CACNB4, CRK, DLG2, DNMBP, DOCK4, EPS8L3, FGR, FYB1, FYN, HCK, ITK, ITSN2, KALRN, LYN, MACC1, MIA, MPP4, MYO15A, NCF1, NCK1, NCK2, NCKIPSD, OSTF1, PIK3R1, PSTPIP1, RIMBP3C, SAMSN1, SH3GL3, SH3PXD2B, SH3PXD2A, SH3RF2, SKAP2, SNX33, SNX9, SORBS3, SPTA1, SRC, SRGAP1, SRGAP2, SRGAP3, TEC, TJP3 and YES1. Post-translationally, the soluble form derives from the membrane form by proteolytic processing. The membrane-bound form undergoes two successive intramembrane proteolytic cleavages. The first one is processed by ADAM10 producing an N-terminal fragment, which lacks the receptor-binding extracellular domain. This ADAM10-processed FasL (FasL APL) remnant form is still membrane anchored and further processed by SPPL2A that liberates the FasL intracellular domain (FasL ICD). FasL shedding by ADAM10 is a prerequisite for subsequent intramembrane cleavage by SPPL2A in T-cells. In terms of processing, phosphorylated by FGR on tyrosine residues; this is required for ubiquitination and subsequent internalization. N-glycosylated. Post-translationally, monoubiquitinated. In terms of tissue distribution, expressed in activated splenocytes and thymocytes. Moderate or weak expression found in small intestines, kidney and lung.

Its subcellular location is the cell membrane. The protein localises to the cytoplasmic vesicle lumen. The protein resides in the lysosome lumen. It is found in the secreted. It localises to the nucleus. Cytokine that binds to TNFRSF6/FAS, a receptor that transduces the apoptotic signal into cells. Involved in cytotoxic T-cell-mediated apoptosis, natural killer cell-mediated apoptosis and in T-cell development. Initiates fratricidal/suicidal activation-induced cell death (AICD) in antigen-activated T-cells contributing to the termination of immune responses. TNFRSF6/FAS-mediated apoptosis also has a role in the induction of peripheral tolerance. Binds to TNFRSF6B/DcR3, a decoy receptor that blocks apoptosis. In terms of biological role, induces FAS-mediated activation of NF-kappa-B, initiating non-apoptotic signaling pathways. Can induce apoptosis but does not appear to be essential for this process. Functionally, cytoplasmic form induces gene transcription inhibition. This Rattus norvegicus (Rat) protein is Tumor necrosis factor ligand superfamily member 6 (Faslg).